The primary structure comprises 229 residues: MNTLLDGIDWEKHPLLPAIVQERGSGEVLMLAYMNQEALNLTLSTQVAHYFSRSKGRIWKKGESSGHIQKIHEIFLDCDSDTILLQVEQVGVACHTGRKSCFFQKVELDSSLSLTSEAPDTSALYGVVDRLYHELLARQGADPQSSYTAKLFSKGENTIGKKIVEEAAELSFAIKDSSESEIVYEAADLLYHALVGLAFRGIHPDKIKQELQRRQGVSGIAEKNSRKDS.

The interval 1-127 is phosphoribosyl-AMP cyclohydrolase; sequence MNTLLDGIDW…APDTSALYGV (127 aa). Residues 128 to 229 form a phosphoribosyl-ATP pyrophosphohydrolase region; sequence VDRLYHELLA…IAEKNSRKDS (102 aa).

In the N-terminal section; belongs to the PRA-CH family. This sequence in the C-terminal section; belongs to the PRA-PH family.

The protein localises to the cytoplasm. The enzyme catalyses 1-(5-phospho-beta-D-ribosyl)-ATP + H2O = 1-(5-phospho-beta-D-ribosyl)-5'-AMP + diphosphate + H(+). The catalysed reaction is 1-(5-phospho-beta-D-ribosyl)-5'-AMP + H2O = 1-(5-phospho-beta-D-ribosyl)-5-[(5-phospho-beta-D-ribosylamino)methylideneamino]imidazole-4-carboxamide. It participates in amino-acid biosynthesis; L-histidine biosynthesis; L-histidine from 5-phospho-alpha-D-ribose 1-diphosphate: step 2/9. It functions in the pathway amino-acid biosynthesis; L-histidine biosynthesis; L-histidine from 5-phospho-alpha-D-ribose 1-diphosphate: step 3/9. The polypeptide is Histidine biosynthesis bifunctional protein HisIE (Wolinella succinogenes (strain ATCC 29543 / DSM 1740 / CCUG 13145 / JCM 31913 / LMG 7466 / NCTC 11488 / FDC 602W) (Vibrio succinogenes)).